The following is a 316-amino-acid chain: Ribosomal protein L11 methyltransferase (316 aa).

Residues threonine 162, glycine 183, aspartate 205, and asparagine 248 each coordinate S-adenosyl-L-methionine.

Belongs to the methyltransferase superfamily. PrmA family.

It is found in the cytoplasm. The enzyme catalyses L-lysyl-[protein] + 3 S-adenosyl-L-methionine = N(6),N(6),N(6)-trimethyl-L-lysyl-[protein] + 3 S-adenosyl-L-homocysteine + 3 H(+). Its function is as follows. Methylates ribosomal protein L11. This chain is Ribosomal protein L11 methyltransferase, found in Levilactobacillus brevis (strain ATCC 367 / BCRC 12310 / CIP 105137 / JCM 1170 / LMG 11437 / NCIMB 947 / NCTC 947) (Lactobacillus brevis).